The chain runs to 89 residues: Small ribosomal subunit protein bS20 (89 aa).

The interval 1-27 is disordered; the sequence is MANIKSAKKDSIISEERRKKNASQRSK. Positions 7–18 are enriched in basic and acidic residues; the sequence is AKKDSIISEERR.

Belongs to the bacterial ribosomal protein bS20 family.

Its function is as follows. Binds directly to 16S ribosomal RNA. The sequence is that of Small ribosomal subunit protein bS20 from Buchnera aphidicola subsp. Schizaphis graminum (strain Sg).